The primary structure comprises 102 residues: MATQKQDEFLLETEQTRTKPPPLYKVLLLNDDFTPMDFVIVVLQKFFGMDRERATRVMLQVHREGMGVCGVFPKDVAATKVEQVVAFARQHQHPLACVMEEN.

Belongs to the ClpS family. Binds to the N-terminal domain of the chaperone ClpA.

Its function is as follows. Involved in the modulation of the specificity of the ClpAP-mediated ATP-dependent protein degradation. In Aromatoleum aromaticum (strain DSM 19018 / LMG 30748 / EbN1) (Azoarcus sp. (strain EbN1)), this protein is ATP-dependent Clp protease adapter protein ClpS.